A 307-amino-acid chain; its full sequence is MYTNLIFIFKIILEGIIEGVTEFLPVSSTGHMIILGSIIGFKEGAKPVSLYGAEYIHMFEIIIQLGAILAIVVLYWDKIFSALKPSNLFPSMKEHEKSGIGVVGEFFVKGYNTMPGFKFWTNIVVACIPAIVIGLPFQKKIDKLLFFPAPVAAALMVGAVWMIFAENKYRKRAKIKSVDEITIKQAIVIGCFQCLALWPGMSRSASTIIGAWIVGVATVAGAEFSFFLAIPMMLGASLLFLIKNSVVLSSVQILGLAVGFIVAFIVALVVVDRFISFLKKKPMRIFAVYRLAIGIIVLVLGFTKVIS.

8 consecutive transmembrane segments (helical) span residues 19-41, 56-76, 117-137, 144-164, 208-228, 229-249, 251-271, and 285-305; these read GVTE…IIGF, IHMF…VLYW, FKFW…GLPF, LLFF…WMIF, IIGA…SFFL, AIPM…VVLS, VQIL…LVVV, and IFAV…FTKV.

The protein belongs to the UppP family.

It is found in the cell membrane. It carries out the reaction di-trans,octa-cis-undecaprenyl diphosphate + H2O = di-trans,octa-cis-undecaprenyl phosphate + phosphate + H(+). Its function is as follows. Catalyzes the dephosphorylation of undecaprenyl diphosphate (UPP). Confers resistance to bacitracin. The protein is Undecaprenyl-diphosphatase 2 of Clostridium acetobutylicum (strain ATCC 824 / DSM 792 / JCM 1419 / IAM 19013 / LMG 5710 / NBRC 13948 / NRRL B-527 / VKM B-1787 / 2291 / W).